We begin with the raw amino-acid sequence, 133 residues long: Small ribosomal subunit protein uS8 (133 aa).

Belongs to the universal ribosomal protein uS8 family. Part of the 30S ribosomal subunit. Contacts proteins S5 and S12.

Its function is as follows. One of the primary rRNA binding proteins, it binds directly to 16S rRNA central domain where it helps coordinate assembly of the platform of the 30S subunit. This chain is Small ribosomal subunit protein uS8, found in Prochlorococcus marinus (strain MIT 9515).